The primary structure comprises 359 residues: Alanine racemase (359 aa).

Catalysis depends on Lys35, which acts as the Proton acceptor; specific for D-alanine. The residue at position 35 (Lys35) is an N6-(pyridoxal phosphate)lysine. Arg130 provides a ligand contact to substrate. The active-site Proton acceptor; specific for L-alanine is Tyr255. Met303 is a binding site for substrate.

It belongs to the alanine racemase family. Requires pyridoxal 5'-phosphate as cofactor.

It carries out the reaction L-alanine = D-alanine. The protein operates within amino-acid biosynthesis; D-alanine biosynthesis; D-alanine from L-alanine: step 1/1. Functionally, catalyzes the interconversion of L-alanine and D-alanine. May also act on other amino acids. The protein is Alanine racemase (alr) of Janthinobacterium sp. (strain Marseille) (Minibacterium massiliensis).